Here is a 217-residue protein sequence, read N- to C-terminus: Ribosomal RNA small subunit methyltransferase G (217 aa).

Residues G78, F83, 129–130 (GE), and R146 contribute to the S-adenosyl-L-methionine site.

It belongs to the methyltransferase superfamily. RNA methyltransferase RsmG family.

It is found in the cytoplasm. It catalyses the reaction guanosine(527) in 16S rRNA + S-adenosyl-L-methionine = N(7)-methylguanosine(527) in 16S rRNA + S-adenosyl-L-homocysteine. Its function is as follows. Specifically methylates the N7 position of guanine in position 527 of 16S rRNA. The polypeptide is Ribosomal RNA small subunit methyltransferase G (Geobacter sulfurreducens (strain ATCC 51573 / DSM 12127 / PCA)).